A 210-amino-acid polypeptide reads, in one-letter code: MRAFKWALAIGATLALPLTAQAQTGGAERLAALLESVTSYSADFDQQILDGGGQRLQEAEGHMWLSRPGKFHWEVEAPYRQVVVSDGDKVYLYDPDLEQVSVRPLDTRVTHTPALLLSGSADALTENYAVESRQGDDEETFTLTPKSPDTLFESLQLTFENERLEGLQMEDSTGQRTAIAFDDIEVNGDIDASRFTFEIPEGADVIREGG.

The first 22 residues, 1–22 (MRAFKWALAIGATLALPLTAQA), serve as a signal peptide directing secretion.

It belongs to the LolA family. In terms of assembly, monomer.

The protein resides in the periplasm. Participates in the translocation of lipoproteins from the inner membrane to the outer membrane. Only forms a complex with a lipoprotein if the residue after the N-terminal Cys is not an aspartate (The Asp acts as a targeting signal to indicate that the lipoprotein should stay in the inner membrane). In Chromohalobacter salexigens (strain ATCC BAA-138 / DSM 3043 / CIP 106854 / NCIMB 13768 / 1H11), this protein is Outer-membrane lipoprotein carrier protein.